A 147-amino-acid polypeptide reads, in one-letter code: Bis(5'-nucleosyl)-tetraphosphatase [asymmetrical] (147 aa).

The residue at position 2 (Ala2) is an N-acetylalanine. The Nudix hydrolase domain maps to 2–139; it reads ALRACGLIIF…EMKATLQEGH (138 aa). The Nudix box motif lies at 43 to 64; the sequence is GHVDPGENDLETALRETREETG.

It belongs to the Nudix hydrolase family. The cofactor is a divalent metal cation.

It carries out the reaction P(1),P(4)-bis(5'-guanosyl) tetraphosphate + H2O = GMP + GTP + 2 H(+). The enzyme catalyses a 5'-end CoA-ribonucleoside in mRNA + H2O = a 5'-end phospho-adenosine-phospho-ribonucleoside in mRNA + (R)-4'-phosphopantetheine + 2 H(+). The catalysed reaction is a 5'-end FAD-phospho-ribonucleoside in mRNA + H2O = a 5'-end phospho-adenosine-phospho-ribonucleoside in mRNA + FMN + 2 H(+). Its function is as follows. Catalyzes the asymmetric hydrolysis of diadenosine 5',5'''-P1,P4-tetraphosphate (Ap4A) to yield AMP and ATP. Exhibits decapping activity towards FAD-capped RNAs and dpCoA-capped RNAs in vitro. In Mus musculus (Mouse), this protein is Bis(5'-nucleosyl)-tetraphosphatase [asymmetrical] (Nudt2).